The chain runs to 87 residues: Kappa 1b-bungarotoxin (87 aa).

The signal sequence occupies residues 1-21; the sequence is MKTLLLTLVVVTIVCLDLGYT. 5 disulfides stabilise this stretch: Cys-24/Cys-42, Cys-35/Cys-63, Cys-48/Cys-52, Cys-67/Cys-79, and Cys-80/Cys-85.

The protein belongs to the three-finger toxin family. Long-chain subfamily. Kappa-neurotoxin sub-subfamily. In terms of assembly, homo- and heterodimer; non-covalently linked. In terms of tissue distribution, expressed by the venom gland.

It localises to the secreted. Postsynaptic neurotoxin that binds and inhibits neuronal nicotinic acetylcholine receptors (nAChR) with high affinity (IC(50)&lt;100 nM). Is a selective, and slowly reversible antagonist of alpha-3/CHRNA3-containing and some alpha-4/CHRNA4-containing AChRs. In Bungarus candidus (Malayan krait), this protein is Kappa 1b-bungarotoxin.